A 205-amino-acid chain; its full sequence is ATP phosphoribosyltransferase (205 aa).

This sequence belongs to the ATP phosphoribosyltransferase family. Short subfamily. In terms of assembly, heteromultimer composed of HisG and HisZ subunits.

It localises to the cytoplasm. It catalyses the reaction 1-(5-phospho-beta-D-ribosyl)-ATP + diphosphate = 5-phospho-alpha-D-ribose 1-diphosphate + ATP. The protein operates within amino-acid biosynthesis; L-histidine biosynthesis; L-histidine from 5-phospho-alpha-D-ribose 1-diphosphate: step 1/9. Catalyzes the condensation of ATP and 5-phosphoribose 1-diphosphate to form N'-(5'-phosphoribosyl)-ATP (PR-ATP). Has a crucial role in the pathway because the rate of histidine biosynthesis seems to be controlled primarily by regulation of HisG enzymatic activity. This chain is ATP phosphoribosyltransferase, found in Leptospira borgpetersenii serovar Hardjo-bovis (strain JB197).